The primary structure comprises 215 residues: Probable ribosome-binding factor A, chloroplastic (215 aa).

The transit peptide at 1–52 directs the protein to the chloroplast; the sequence is MPNLLHTNQSHFFFLHHPPIYTVSSKTQAFHFPQSMAPVNLRTNLSVRRTVR. Over residues 183–192 the composition is skewed to basic and acidic residues; the sequence is KGSGEGKTEP. The tract at residues 183–210 is disordered; it reads KGSGEGKTEPSDSTEDDQDWEVDDPDED. Acidic residues predominate over residues 194-210; the sequence is DSTEDDQDWEVDDPDED.

Belongs to the RbfA family.

The protein localises to the plastid. It is found in the chloroplast. The sequence is that of Probable ribosome-binding factor A, chloroplastic from Arabidopsis thaliana (Mouse-ear cress).